We begin with the raw amino-acid sequence, 182 residues long: Ribosome maturation factor RimP (182 aa).

It belongs to the RimP family.

The protein resides in the cytoplasm. In terms of biological role, required for maturation of 30S ribosomal subunits. The polypeptide is Ribosome maturation factor RimP (Chloroherpeton thalassium (strain ATCC 35110 / GB-78)).